We begin with the raw amino-acid sequence, 571 residues long: Chondroitin sulfate proteoglycan 5 (571 aa).

An N-terminal signal peptide occupies residues M1 to A30. Over V31–C428 the chain is Extracellular. O-linked (Xyl...) (chondroitin sulfate) serine glycosylation is present at S38. N-linked (GlcNAc...) asparagine glycosylation is present at N57. The tract at residues N57–P91 is disordered. An O-linked (GalNAc...) threonine glycan is attached at T76. S123 carries O-linked (Xyl...) (chondroitin sulfate) serine glycosylation. An O-linked (GalNAc...) threonine glycan is attached at T132. Disordered stretches follow at residues D137–L169, G186–W254, and D279–T357. S143 carries an O-linked (GalNAc...) serine glycan. O-linked (GalNAc...) threonine glycosylation is found at T144 and T153. Residues S156 and S160 are each glycosylated (O-linked (GalNAc...) serine). 2 O-linked (GalNAc...) threonine glycosylation sites follow: T162 and T198. A compositionally biased stretch (acidic residues) spans I214–D223. O-linked (GalNAc...) threonine glycosylation occurs at T240. Residues D270 to L306 are interaction with TNC and TNR. The segment covering D279–K291 has biased composition (acidic residues). Residues T318 and T322 are each glycosylated (O-linked (GalNAc...) threonine). N-linked (GlcNAc...) asparagine glycosylation occurs at N372. Residues R376–E418 enclose the EGF-like domain. Cystine bridges form between C379-C392, C386-C402, and C404-C417. The chain crosses the membrane as a helical span at residues V429–A449. Residues F447 to T465 are interaction with GOPC. Residues K450–T571 lie on the Cytoplasmic side of the membrane. Phosphoserine occurs at positions 472, 480, 488, and 548. The interval E538 to V563 is disordered.

As to quaternary structure, interacts with ERBB3 and GOPC. Binds TNR and probably TNC. Interacts with MDK; this interaction is independent of the presence of chondroitin sulfate chains and promotes elongation of oligodendroglial precursor-like cells. N-glycosylated. In terms of processing, O-glycosylated; contains chondroitin sulfate glycans. Part-time proteoglycan, expressed in part as a proteoglycan exhibiting chondroitin sulfate glycans and in part as a non-proteoglycan form. The relative amount of both forms depends on tissues and tissue maturation. Post-translationally, phosphorylated; in intracellular and extracellular parts. In terms of tissue distribution, expressed in cerebral cortex and cerebellum. Expressed in retina (at protein level).

The protein localises to the cell membrane. Its subcellular location is the synaptic cell membrane. It localises to the endoplasmic reticulum membrane. It is found in the golgi apparatus membrane. The protein resides in the cell surface. The protein localises to the secreted. May function as a growth and differentiation factor involved in neuritogenesis. May induce ERBB3 activation. This Rattus norvegicus (Rat) protein is Chondroitin sulfate proteoglycan 5 (Cspg5).